The primary structure comprises 190 residues: Orotate phosphoribosyltransferase (190 aa).

114-122 (EDVVTTGGS) serves as a coordination point for 5-phospho-alpha-D-ribose 1-diphosphate. Orotate contacts are provided by Thr118 and Arg146.

This sequence belongs to the purine/pyrimidine phosphoribosyltransferase family. PyrE subfamily. As to quaternary structure, homodimer. Requires Mg(2+) as cofactor.

It catalyses the reaction orotidine 5'-phosphate + diphosphate = orotate + 5-phospho-alpha-D-ribose 1-diphosphate. Its pathway is pyrimidine metabolism; UMP biosynthesis via de novo pathway; UMP from orotate: step 1/2. Catalyzes the transfer of a ribosyl phosphate group from 5-phosphoribose 1-diphosphate to orotate, leading to the formation of orotidine monophosphate (OMP). The protein is Orotate phosphoribosyltransferase of Thermoanaerobacter sp. (strain X514).